The sequence spans 710 residues: Fatty acid oxidation complex subunit alpha (710 aa).

Residues 1 to 190 are enoyl-CoA hydratase; it reads MSMEKTFNLA…KMGLVNDVVP (190 aa). The interval 310–710 is 3-hydroxyacyl-CoA dehydrogenase; the sequence is RKVKKVMVLG…ASDGSQFYKK (401 aa).

The protein in the N-terminal section; belongs to the enoyl-CoA hydratase/isomerase family. It in the central section; belongs to the 3-hydroxyacyl-CoA dehydrogenase family. As to quaternary structure, heterotetramer of two alpha chains (FadJ) and two beta chains (FadI).

The protein resides in the cytoplasm. The enzyme catalyses a (3S)-3-hydroxyacyl-CoA = a (2E)-enoyl-CoA + H2O. The catalysed reaction is a 4-saturated-(3S)-3-hydroxyacyl-CoA = a (3E)-enoyl-CoA + H2O. It catalyses the reaction a (3S)-3-hydroxyacyl-CoA + NAD(+) = a 3-oxoacyl-CoA + NADH + H(+). It carries out the reaction (3S)-3-hydroxybutanoyl-CoA = (3R)-3-hydroxybutanoyl-CoA. It participates in lipid metabolism; fatty acid beta-oxidation. Functionally, catalyzes the formation of a hydroxyacyl-CoA by addition of water on enoyl-CoA. Also exhibits 3-hydroxyacyl-CoA epimerase and 3-hydroxyacyl-CoA dehydrogenase activities. The protein is Fatty acid oxidation complex subunit alpha of Shewanella frigidimarina (strain NCIMB 400).